The following is a 189-amino-acid chain: Movement protein (189 aa).

The protein belongs to the tombusvirus/aureusvirus movement protein p22 family. As to quaternary structure, interacts with host protein HFI22. In terms of processing, phosphorylated.

The protein resides in the host membrane. Transports viral genome to neighboring plant cells directly through plasmosdesmata, without any budding. The movement protein allows efficient cell to cell propagation, by bypassing the host cell wall barrier. Displays RNA-binding activity. This chain is Movement protein, found in Capsicum annuum (Capsicum pepper).